The chain runs to 528 residues: ATP synthase subunit alpha 1 (528 aa).

169 to 176 contacts ATP; sequence GDRQTGKT.

The protein belongs to the ATPase alpha/beta chains family. In terms of assembly, F-type ATPases have 2 components, CF(1) - the catalytic core - and CF(0) - the membrane proton channel. CF(1) has five subunits: alpha(3), beta(3), gamma(1), delta(1), epsilon(1). CF(0) has three main subunits: a(1), b(2) and c(9-12). The alpha and beta chains form an alternating ring which encloses part of the gamma chain. CF(1) is attached to CF(0) by a central stalk formed by the gamma and epsilon chains, while a peripheral stalk is formed by the delta and b chains.

It localises to the cell membrane. The enzyme catalyses ATP + H2O + 4 H(+)(in) = ADP + phosphate + 5 H(+)(out). Functionally, produces ATP from ADP in the presence of a proton gradient across the membrane. The alpha chain is a regulatory subunit. This is ATP synthase subunit alpha 1 from Mycoplasmopsis pulmonis (strain UAB CTIP) (Mycoplasma pulmonis).